A 200-amino-acid chain; its full sequence is ATP-dependent Clp protease proteolytic subunit (200 aa).

Ser101 (nucleophile) is an active-site residue. The active site involves His126.

Belongs to the peptidase S14 family. As to quaternary structure, component of the chloroplastic Clp protease core complex.

The protein resides in the plastid. It localises to the chloroplast stroma. The catalysed reaction is Hydrolysis of proteins to small peptides in the presence of ATP and magnesium. alpha-casein is the usual test substrate. In the absence of ATP, only oligopeptides shorter than five residues are hydrolyzed (such as succinyl-Leu-Tyr-|-NHMec, and Leu-Tyr-Leu-|-Tyr-Trp, in which cleavage of the -Tyr-|-Leu- and -Tyr-|-Trp bonds also occurs).. Its function is as follows. Cleaves peptides in various proteins in a process that requires ATP hydrolysis. Has a chymotrypsin-like activity. Plays a major role in the degradation of misfolded proteins. The protein is ATP-dependent Clp protease proteolytic subunit of Adiantum capillus-veneris (Maidenhair fern).